The primary structure comprises 360 residues: Peptide chain release factor 1 (360 aa).

Q237 is subject to N5-methylglutamine.

Belongs to the prokaryotic/mitochondrial release factor family. Post-translationally, methylated by PrmC. Methylation increases the termination efficiency of RF1.

Its subcellular location is the cytoplasm. Peptide chain release factor 1 directs the termination of translation in response to the peptide chain termination codons UAG and UAA. This Pseudomonas putida (strain ATCC 47054 / DSM 6125 / CFBP 8728 / NCIMB 11950 / KT2440) protein is Peptide chain release factor 1.